A 369-amino-acid polypeptide reads, in one-letter code: DNA replication and repair protein RecF (369 aa).

30-37 (GDNAQGKT) is a binding site for ATP.

Belongs to the RecF family.

Its subcellular location is the cytoplasm. Its function is as follows. The RecF protein is involved in DNA metabolism; it is required for DNA replication and normal SOS inducibility. RecF binds preferentially to single-stranded, linear DNA. It also seems to bind ATP. The chain is DNA replication and repair protein RecF from Streptococcus equi subsp. equi (strain 4047).